A 360-amino-acid chain; its full sequence is Peptide chain release factor 1 (360 aa).

Gln-235 is subject to N5-methylglutamine. Residues 281-307 (ERQRADSERSADRRNQVGSGDRSERIR) are compositionally biased toward basic and acidic residues. The tract at residues 281 to 310 (ERQRADSERSADRRNQVGSGDRSERIRTYN) is disordered.

The protein belongs to the prokaryotic/mitochondrial release factor family. Methylated by PrmC. Methylation increases the termination efficiency of RF1.

The protein resides in the cytoplasm. Its function is as follows. Peptide chain release factor 1 directs the termination of translation in response to the peptide chain termination codons UAG and UAA. This Sinorhizobium medicae (strain WSM419) (Ensifer medicae) protein is Peptide chain release factor 1.